Consider the following 102-residue polypeptide: Small ribosomal subunit protein uS10 (102 aa).

The segment at proline 37 to phenylalanine 61 is disordered.

Belongs to the universal ribosomal protein uS10 family. Part of the 30S ribosomal subunit.

In terms of biological role, involved in the binding of tRNA to the ribosomes. In Methanococcus vannielii (strain ATCC 35089 / DSM 1224 / JCM 13029 / OCM 148 / SB), this protein is Small ribosomal subunit protein uS10.